The following is a 674-amino-acid chain: MTLEEARRRVNELRDLIRYHNYLYYVLDAPEISDAEYDRLLRELKELEERFPELKSPDSPTEQVGARPLEATFRPVRHPTRMYSLDNAFSLDEVRAFEERIERALGRKGPFLYTVERKVDGLSVNLYYEEGILVFGATRGDGETGEEVTQNLLTIPTIPRRLTGVPDRLEVRGEVYMPIEAFLRLNQELEEAGERIFKNPRNAAAGSLRQKDPRVTARRGLRATFYALGLGLEETGLKSQHDLLLWLRERGFPVEHGFTRALGAEGVEEVYQAWLKERRKLPFEADGVVVKLDDLALWRELGYTARTPRFALAYKFPAEEKETRLLSVAFQVGRTGRITPVGVLEPVFIEGSEVSRVTLHNESFIEELDVRIGDWVLVHKAGGVIPEVLRVLKERRTGEEKPIIWPENCPECGHALIKEGKVHRCPNPLCPAKRFEAIRHYASRKAMDIQGLGEKLIEKLLEKGLVRDVADLYRLKKEDLVNLERMGEKSAENLLRQIEESKGRGLERLLYALGLPGVGEVLARNLALRFGHMDRLLEAGLEDLLEVEGVGELTARAILNTLKDPEFRDLVRRLKEAGVEMEAKEREGEALKGLTFVITGELSRPREEVKALLRRLGAKVTDSVSRKTSFLVVGENPGSKLEKARALGVPTLSEEELYRLIEERTGKDPRALTA.

NAD(+)-binding positions include 34–38 (DAEYD), 84–85 (SL), and glutamate 116. The N6-AMP-lysine intermediate role is filled by lysine 118. Positions 139, 174, 291, and 315 each coordinate NAD(+). The Zn(2+) site is built by cysteine 409, cysteine 412, cysteine 425, and cysteine 430. Residues 586–674 (REGEALKGLT…TGKDPRALTA (89 aa)) enclose the BRCT domain.

The protein belongs to the NAD-dependent DNA ligase family. LigA subfamily. Mg(2+) is required as a cofactor. Requires Mn(2+) as cofactor.

It catalyses the reaction NAD(+) + (deoxyribonucleotide)n-3'-hydroxyl + 5'-phospho-(deoxyribonucleotide)m = (deoxyribonucleotide)n+m + AMP + beta-nicotinamide D-nucleotide.. DNA ligase that catalyzes the formation of phosphodiester linkages between 5'-phosphoryl and 3'-hydroxyl groups in double-stranded DNA using NAD as a coenzyme and as the energy source for the reaction. It is essential for DNA replication and repair of damaged DNA. The polypeptide is DNA ligase (Thermus sp. (strain AK16D)).